A 195-amino-acid polypeptide reads, in one-letter code: Ras-related protein rac-2 (195 aa).

A GTP-binding site is contributed by 10-17; that stretch reads GDGAVGKT. Residues 32-40 carry the Effector region motif; that stretch reads YILTVFDTY. Residues 57 to 61 and 115 to 118 each bind GTP; these read DTAGQ and TKAD. The segment at 176–195 is disordered; it reads GLTPPQTPQTRAKKSNCTVL. Cys-192 carries the post-translational modification Cysteine methyl ester. Cys-192 is lipidated: S-geranylgeranyl cysteine. The propeptide at 193-195 is removed in mature form; sequence TVL.

The protein belongs to the small GTPase superfamily. Rho family.

The protein resides in the cell membrane. In terms of biological role, during gonad morphogenesis, plays a role in distal tip cell (DTC)-mediated guidance of gonad elongation. In Caenorhabditis elegans, this protein is Ras-related protein rac-2 (rac-2).